Reading from the N-terminus, the 276-residue chain is Rhomboid protease GlpG (276 aa).

The next 6 membrane-spanning stretches (helical) occupy residues 94-114 (GPFT…QNLL), 142-162 (AFMH…WYLG), 169-189 (IGSG…GFVQ), 192-212 (FSGP…GYVW), 229-249 (LILF…GMAI), and 252-272 (GAHV…TLHG). The Nucleophile role is filled by serine 201. Histidine 254 is an active-site residue.

The protein belongs to the peptidase S54 family.

It localises to the cell inner membrane. The enzyme catalyses Cleaves type-1 transmembrane domains using a catalytic dyad composed of serine and histidine that are contributed by different transmembrane domains.. In terms of biological role, rhomboid-type serine protease that catalyzes intramembrane proteolysis. The chain is Rhomboid protease GlpG from Klebsiella pneumoniae (strain 342).